Reading from the N-terminus, the 673-residue chain is ATP-dependent zinc metalloprotease FtsH (673 aa).

Residues Met1–Asn7 are Cytoplasmic-facing. A helical transmembrane segment spans residues Leu8 to Pro28. Residues Gln29 to Met100 lie on the Periplasmic side of the membrane. A helical transmembrane segment spans residues Leu101–Phe121. Topologically, residues Met122–Arg673 are cytoplasmic. Gly194–Thr201 provides a ligand contact to ATP. His416 serves as a coordination point for Zn(2+). The active site involves Glu417. Residues His420 and Asp492 each coordinate Zn(2+). The tract at residues Ala601 to Arg673 is disordered. A compositionally biased stretch (polar residues) spans Ser648–Val660. The segment covering Val661–Arg673 has biased composition (basic and acidic residues).

The protein in the central section; belongs to the AAA ATPase family. It in the C-terminal section; belongs to the peptidase M41 family. In terms of assembly, homohexamer. Zn(2+) is required as a cofactor.

It is found in the cell inner membrane. In terms of biological role, acts as a processive, ATP-dependent zinc metallopeptidase for both cytoplasmic and membrane proteins. Plays a role in the quality control of integral membrane proteins. This chain is ATP-dependent zinc metalloprotease FtsH, found in Magnetococcus marinus (strain ATCC BAA-1437 / JCM 17883 / MC-1).